Here is a 133-residue protein sequence, read N- to C-terminus: Ribonuclease P protein component (133 aa).

This sequence belongs to the RnpA family. Consists of a catalytic RNA component (M1 or rnpB) and a protein subunit.

It carries out the reaction Endonucleolytic cleavage of RNA, removing 5'-extranucleotides from tRNA precursor.. In terms of biological role, RNaseP catalyzes the removal of the 5'-leader sequence from pre-tRNA to produce the mature 5'-terminus. It can also cleave other RNA substrates such as 4.5S RNA. The protein component plays an auxiliary but essential role in vivo by binding to the 5'-leader sequence and broadening the substrate specificity of the ribozyme. The chain is Ribonuclease P protein component from Pseudomonas putida (strain ATCC 47054 / DSM 6125 / CFBP 8728 / NCIMB 11950 / KT2440).